The sequence spans 229 residues: Cytochrome c oxidase subunit 2 (229 aa).

At 1–26 (MANWTQLGLQDASSPLMEELIYFHDY) the chain is on the mitochondrial intermembrane side. Residues 27–48 (TLIILTLITILVFYGLASLLFS) form a helical membrane-spanning segment. Residues 49-62 (SNTNRFFLEGQGLE) are Mitochondrial matrix-facing. A helical membrane pass occupies residues 63-82 (TVWTIIPAVILIFIALPSLQ). Residues 83–229 (LLYLMDEVNN…ETWVSNFITE (147 aa)) are Mitochondrial intermembrane-facing. Cu cation-binding residues include His-161, Cys-196, Glu-198, Cys-200, His-204, and Met-207. Glu-198 is a binding site for Mg(2+).

It belongs to the cytochrome c oxidase subunit 2 family. Component of the cytochrome c oxidase (complex IV, CIV), a multisubunit enzyme composed of a catalytic core of 3 subunits and several supernumerary subunits. The complex exists as a monomer or a dimer and forms supercomplexes (SCs) in the inner mitochondrial membrane with ubiquinol-cytochrome c oxidoreductase (cytochrome b-c1 complex, complex III, CIII). Cu cation serves as cofactor.

The protein localises to the mitochondrion inner membrane. It catalyses the reaction 4 Fe(II)-[cytochrome c] + O2 + 8 H(+)(in) = 4 Fe(III)-[cytochrome c] + 2 H2O + 4 H(+)(out). Functionally, component of the cytochrome c oxidase, the last enzyme in the mitochondrial electron transport chain which drives oxidative phosphorylation. The respiratory chain contains 3 multisubunit complexes succinate dehydrogenase (complex II, CII), ubiquinol-cytochrome c oxidoreductase (cytochrome b-c1 complex, complex III, CIII) and cytochrome c oxidase (complex IV, CIV), that cooperate to transfer electrons derived from NADH and succinate to molecular oxygen, creating an electrochemical gradient over the inner membrane that drives transmembrane transport and the ATP synthase. Cytochrome c oxidase is the component of the respiratory chain that catalyzes the reduction of oxygen to water. Electrons originating from reduced cytochrome c in the intermembrane space (IMS) are transferred via the dinuclear copper A center (CU(A)) of subunit 2 and heme A of subunit 1 to the active site in subunit 1, a binuclear center (BNC) formed by heme A3 and copper B (CU(B)). The BNC reduces molecular oxygen to 2 water molecules using 4 electrons from cytochrome c in the IMS and 4 protons from the mitochondrial matrix. This chain is Cytochrome c oxidase subunit 2 (COII), found in Patiria pectinifera (Starfish).